A 518-amino-acid chain; its full sequence is Vesicular inhibitory amino acid transporter (518 aa).

The Cytoplasmic segment spans residues 1–125; the sequence is MATLIRSKLS…WNVTNAIQGM (125 aa). The tract at residues 66-98 is disordered; that stretch reads EVPSGDPTAEGDSHYQRDGTGPPSSASKDEGLC. Residues 126–146 form a helical membrane-spanning segment; it reads FVLGLPYAILHGGYLGLFLII. At 147–197 the chain is on the lumenal, vesicle side; that stretch reads FAAVVCCYTGKILIACLYEENEDGETVRVRDSYVDIANACCAPRFPKLGGR. The helical transmembrane segment at 198-218 threads the bilayer; the sequence is VVNVAQIIELVMTCILYVVVS. The Cytoplasmic segment spans residues 219–258; sequence GNLMYNSFPSLPISQKSWSIIATAMLLPCAFLKNLKAVSK. A helical membrane pass occupies residues 259 to 279; the sequence is FSLLCTLAHFVINVLVIAYCL. The Lumenal, vesicle segment spans residues 280–298; it reads SRARDWAWDKVKFYIDVKK. The chain crosses the membrane as a helical span at residues 299–319; the sequence is FPISIGIIVFSYTSQIFLPSL. Residues 320 to 334 are Cytoplasmic-facing; the sequence is EGNMQSPKEFHCMMN. The helical transmembrane segment at 335-355 threads the bilayer; sequence WTHIAACILKGLFALVAYLTW. The Lumenal, vesicle portion of the chain corresponds to 356–376; the sequence is ADETKEVITDNLPSTIRAVVN. Residues 377–397 form a helical membrane-spanning segment; that stretch reads LFLVAKALLSYPLPFFAAVEV. The Cytoplasmic portion of the chain corresponds to 398 to 431; it reads LEKSLFQEGARAFFPNCYGGDGRLKSWGLTLRCA. A helical transmembrane segment spans residues 432–452; it reads LVVFTLLMAIYVPHFALLMGL. Over 453–454 the chain is Lumenal, vesicle; sequence TG. The helical transmembrane segment at 455–475 threads the bilayer; the sequence is SLTGAGLCFLLPSLFHLKLLW. Over 476-482 the chain is Cytoplasmic; it reads RKLQWHQ. Residues 483 to 503 form a helical membrane-spanning segment; it reads VFFDVSIFVIGSICSVSGFVH. The Lumenal, vesicle portion of the chain corresponds to 504-518; sequence SLEGLIEAFRFNIED.

This sequence belongs to the amino acid/polyamine transporter 2 family.

The protein resides in the cytoplasmic vesicle membrane. Its subcellular location is the presynapse. The enzyme catalyses 4-aminobutanoate(out) + n H(+)(in) = 4-aminobutanoate(in) + n H(+)(out). It catalyses the reaction glycine(out) + n H(+)(in) = glycine(in) + n H(+)(out). It carries out the reaction beta-alanine(out) + n H(+)(in) = beta-alanine(in) + n H(+)(out). Functionally, antiporter that exchanges vesicular protons for cytosolic 4-aminobutanoate or to a lesser extend glycine, thus allowing their secretion from nerve terminals. The transport is equally dependent on the chemical and electrical components of the proton gradient. May also transport beta-alanine. Acidification of GABAergic synaptic vesicles is a prerequisite for 4-aminobutanoate uptake. This chain is Vesicular inhibitory amino acid transporter, found in Xenopus tropicalis (Western clawed frog).